Here is a 472-residue protein sequence, read N- to C-terminus: Phenylalanine--tRNA ligase, mitochondrial (472 aa).

Residues 157–160 (SAHQ), R179, 186–188 (QHY), and 193–195 (QLE) contribute to the substrate site. At K202 the chain carries N6-acetyllysine. Substrate contacts are provided by E287 and F312. In terms of domain architecture, FDX-ACB spans 379-471 (SKYPAVFNDI…AVQLLGVEGR (93 aa)).

Belongs to the class-II aminoacyl-tRNA synthetase family. As to quaternary structure, monomer. In terms of tissue distribution, mainly expressed in the Purkinje cell of cerebellum.

It localises to the mitochondrion matrix. Its subcellular location is the mitochondrion. It catalyses the reaction tRNA(Phe) + L-phenylalanine + ATP = L-phenylalanyl-tRNA(Phe) + AMP + diphosphate + H(+). Is responsible for the charging of tRNA(Phe) with phenylalanine in mitochondrial translation. To a lesser extent, also catalyzes direct attachment of m-Tyr (an oxidized version of Phe) to tRNA(Phe), thereby opening the way for delivery of the misacylated tRNA to the ribosome and incorporation of ROS-damaged amino acid into proteins. The polypeptide is Phenylalanine--tRNA ligase, mitochondrial (Fars2) (Rattus norvegicus (Rat)).